A 527-amino-acid chain; its full sequence is UDP-glucuronosyltransferase 2A1 (527 aa).

Residues 1-20 (MLNNLLLFSLQISLIGTTLG) form the signal peptide. The Lumenal segment spans residues 21–491 (GNVLIWPMEG…TWFQYHSLDV (471 aa)). N-linked (GlcNAc...) asparagine glycans are attached at residues Asn49, Leu313, and Asn347. The helical transmembrane segment at 492–512 (IGFLLVCVTTAIFLVIQCCLF) threads the bilayer. The Cytoplasmic portion of the chain corresponds to 513–527 (SCQKFGKIGKKKKRE).

This sequence belongs to the UDP-glycosyltransferase family. In terms of tissue distribution, olfactory epithelium, brain and fetal lung. Not present in liver.

It localises to the membrane. The protein localises to the endoplasmic reticulum membrane. The enzyme catalyses glucuronate acceptor + UDP-alpha-D-glucuronate = acceptor beta-D-glucuronoside + UDP + H(+). The catalysed reaction is 16beta,17beta-estriol + UDP-alpha-D-glucuronate = 16beta,17beta-estriol 16-O-(beta-D-glucuronate) + UDP + H(+). It carries out the reaction 16alpha,17alpha-estriol + UDP-alpha-D-glucuronate = 16alpha,17alpha-estriol 16-O-(beta-D-glucuronate) + UDP + H(+). It catalyses the reaction 17alpha-estradiol + UDP-alpha-D-glucuronate = 17alpha-estradiol 17-O-(beta-D-glucuronate) + UDP + H(+). The enzyme catalyses 17alpha-estradiol + UDP-alpha-D-glucuronate = 17alpha-estradiol 3-O-(beta-D-glucuronate) + UDP + H(+). The catalysed reaction is 17beta-estradiol + UDP-alpha-D-glucuronate = 17beta-estradiol 3-O-(beta-D-glucuronate) + UDP + H(+). It carries out the reaction 17beta-estradiol + UDP-alpha-D-glucuronate = 17beta-estradiol 17-O-(beta-D-glucuronate) + UDP + H(+). It catalyses the reaction testosterone + UDP-alpha-D-glucuronate = testosterone 17-O-(beta-D-glucuronate) + UDP + H(+). The enzyme catalyses epitestosterone + UDP-alpha-D-glucuronate = epitestosterone 17-O-(beta-D-glucuronate) + UDP + H(+). The catalysed reaction is lithocholate + UDP-alpha-D-glucuronate = lithocholoyl-3-O-(beta-D-glucuronate) + UDP + H(+). It carries out the reaction lithocholate + UDP-alpha-D-glucuronate = lithocholoyl-24-O-(beta-D-glucuronate) + UDP. It catalyses the reaction deoxycholate + UDP-alpha-D-glucuronate = deoxycholoyl-24-O-(beta-D-glucuronate) + UDP. The enzyme catalyses hyodeoxycholate + UDP-alpha-D-glucuronate = hyodeoxycholoyl-24-O-(beta-D-glucuronate) + UDP. The catalysed reaction is hyocholate + UDP-alpha-D-glucuronate = hyocholoyl-24-O-(beta-D-glucuronate) + UDP. Its function is as follows. UDP-glucuronosyltransferase (UGT) that catalyzes phase II biotransformation reactions in which lipophilic substrates are conjugated with glucuronic acid to increase the metabolite's water solubility, thereby facilitating excretion into either the urine or bile. Essential for the elimination and detoxification of drugs, xenobiotics and endogenous compounds. Catalyzes the glucuronidation of endogenous steroid hormones such as androgens (testosterone and epitestosterone) and estrogens (estradiol and epiestriol). Contributes to bile acid (BA) detoxification by catalyzing the glucuronidation of BA substrates, which are natural detergents for dietary lipids absorption. Shows a high affinity to aliphatic odorants such as citronellol as well as olfactory tissue specificity, and therefore may be involved in olfaction. Shows a potential role in detoxification of toxic waste compounds in the amniotic fluid before birth, and air-born chemical after birth. The polypeptide is UDP-glucuronosyltransferase 2A1 (Homo sapiens (Human)).